Here is a 202-residue protein sequence, read N- to C-terminus: Small ribosomal subunit protein uS4c (202 aa).

The disordered stretch occupies residues 20–43; sequence GLTRKTTRRNSRPGQHGDQPRKPS. The region spanning 90–152 is the S4 RNA-binding domain; the sequence is MRLDNIVFRL…ARSKQLVENY (63 aa).

The protein belongs to the universal ribosomal protein uS4 family. In terms of assembly, part of the 30S ribosomal subunit. Contacts protein S5. The interaction surface between S4 and S5 is involved in control of translational fidelity.

Its subcellular location is the plastid. The protein localises to the chloroplast. In terms of biological role, one of the primary rRNA binding proteins, it binds directly to 16S rRNA where it nucleates assembly of the body of the 30S subunit. Its function is as follows. With S5 and S12 plays an important role in translational accuracy. This Rhodomonas salina (Cryptomonas salina) protein is Small ribosomal subunit protein uS4c (rps4).